The sequence spans 250 residues: Cytochrome c oxidase subunit 2 (250 aa).

The Mitochondrial intermembrane segment spans residues 1 to 27; it reads MGLLFNNLIMNFDAPSPWGIYFQDSAT. Residues 28–61 form a helical membrane-spanning segment; that stretch reads PQMEGLVELHDNIMYYLVVILFGVGWILLSIIRN. Over 62-77 the chain is Mitochondrial matrix; sequence YISTKSPISHKYLNHG. The helical transmembrane segment at 78–107 threads the bilayer; that stretch reads TLIELIWTITPAVILILIAFPSFKLLYLMD. Topologically, residues 108–250 are mitochondrial intermembrane; that stretch reads EVSDPSMSVL…EKFLTWLEEQ (143 aa). The Cu cation site is built by His-185, Cys-220, Glu-222, Cys-224, His-228, and Met-231. Residue Glu-222 participates in Mg(2+) binding.

The protein belongs to the cytochrome c oxidase subunit 2 family. Component of the cytochrome c oxidase (complex IV, CIV), a multisubunit enzyme composed of 11 subunits. The complex is composed of a catalytic core of 3 subunits Cox1, Cox2 and Cox3, encoded in the mitochondrial DNA, and 8 supernumerary subunits Cox4, Cox5a/Cox5, Cox6, Cox7, Cox8, Cox7a/Cox9, Cox6b/Cox12 and Cox6a/Cox13, which are encoded in the nuclear genome. The complex exists as a monomer or a dimer and forms respiratory supercomplexes (SCs) in the inner mitochondrial membrane with NADH-ubiquinone oxidoreductase (complex I, CI) and ubiquinol-cytochrome c oxidoreductase (cytochrome b-c1 complex, complex III, CIII), resulting in various different assemblies (supercomplexes I(1)IV(1), I(1)III(3)IV(2), III(2)IV(1) and III(2)IV(2) as well as larger supercomplexes of compositions like I(1)III(2)IV(5-6)). It depends on Cu cation as a cofactor.

Its subcellular location is the mitochondrion inner membrane. It carries out the reaction 4 Fe(II)-[cytochrome c] + O2 + 8 H(+)(in) = 4 Fe(III)-[cytochrome c] + 2 H2O + 4 H(+)(out). Functionally, component of the cytochrome c oxidase, the last enzyme in the mitochondrial electron transport chain which drives oxidative phosphorylation. The respiratory chain contains 3 multisubunit complexes succinate dehydrogenase (complex II, CII), ubiquinol-cytochrome c oxidoreductase (cytochrome b-c1 complex, complex III, CIII) and cytochrome c oxidase (complex IV, CIV), that cooperate to transfer electrons derived from NADH and succinate to molecular oxygen, creating an electrochemical gradient over the inner membrane that drives transmembrane transport and the ATP synthase. Cytochrome c oxidase is the component of the respiratory chain that catalyzes the reduction of oxygen to water. Electrons originating from reduced cytochrome c in the intermembrane space (IMS) are transferred via the dinuclear copper A center (CU(A)) of Cox2 and heme A of Cox1 to the active site in Cox1, a binuclear center (BNC) formed by heme A3 and copper B (CU(B)). The BNC reduces molecular oxygen to 2 water molecules using 4 electrons from cytochrome c in the IMS and 4 protons from the mitochondrial matrix. The chain is Cytochrome c oxidase subunit 2 (cox-2) from Neurospora crassa (strain ATCC 24698 / 74-OR23-1A / CBS 708.71 / DSM 1257 / FGSC 987).